We begin with the raw amino-acid sequence, 212 residues long: 3-isopropylmalate dehydratase small subunit 2 (212 aa).

This sequence belongs to the LeuD family. LeuD type 1 subfamily. Heterodimer of LeuC and LeuD.

It catalyses the reaction (2R,3S)-3-isopropylmalate = (2S)-2-isopropylmalate. The protein operates within amino-acid biosynthesis; L-leucine biosynthesis; L-leucine from 3-methyl-2-oxobutanoate: step 2/4. Its function is as follows. Catalyzes the isomerization between 2-isopropylmalate and 3-isopropylmalate, via the formation of 2-isopropylmaleate. The chain is 3-isopropylmalate dehydratase small subunit 2 from Chromobacterium violaceum (strain ATCC 12472 / DSM 30191 / JCM 1249 / CCUG 213 / NBRC 12614 / NCIMB 9131 / NCTC 9757 / MK).